A 735-amino-acid polypeptide reads, in one-letter code: Dolichyl-diphosphooligosaccharide--protein glycosyltransferase subunit STT3B (735 aa).

Residues 1 to 38 (MGGKSEPAKSESMATKPDLLNTSFFSFKSLKLKTKQQE) are Cytoplasmic-facing. The helical transmembrane segment at 39–59 (LLLRISILGLVYILAFIARLF) threads the bilayer. Residues 60–142 (SVLRYESMIH…VHIREVCVLT (83 aa)) are Lumenal-facing. Positions 70–72 (EFD) match the DXD motif 1 motif. D72 provides a ligand contact to Mn(2+). The helical transmembrane segment at 143–161 (APFFASNTTLVAYFFGKEL) threads the bilayer. At 162 to 163 (WD) the chain is on the cytoplasmic side. Residues 164 to 181 (TGAGLVAAVLIAICPGYI) form a helical membrane-spanning segment. Topologically, residues 182-192 (SRSVAGSYDNE) are lumenal. Mn(2+) is bound by residues D190 and E192. The DXD motif 2 motif lies at 190–192 (DNE). A helical transmembrane segment spans residues 193–212 (AVAIFALLLTFYLFVKAVNT). Residues 213 to 214 (GS) lie on the Cytoplasmic side of the membrane. The helical transmembrane segment at 215-229 (LAWALASAFGYFYMV) threads the bilayer. At 230-234 (SAWGG) the chain is on the lumenal side. A helical membrane pass occupies residues 235–251 (YVFIINLVPLYVLVLLI). The Cytoplasmic portion of the chain corresponds to 252 to 256 (TGRYS). A helical membrane pass occupies residues 257–282 (MRLYIAYNCMYILGMLLAMQIRFVGF). Residues 283 to 290 (QHVQSGEH) lie on the Lumenal side of the membrane. The chain crosses the membrane as a helical span at residues 291–310 (MGAMGVFLLMQVFYFLDWVK). At 311–326 (YQLNDTKLFQTFLRIT) the chain is on the cytoplasmic side. The helical transmembrane segment at 327 to 347 (VTSAILVGGVAVGVGTASGYI) threads the bilayer. Topologically, residues 348-380 (SPWTGRFYSLLDPTYAKDHIPIIASVSEHQPTA) are lumenal. The SVSE motif signature appears at 372–375 (SVSE). Residues 381–403 (WSSFMFDYHILLFLFPAGLYFCF) form a helical membrane-spanning segment. Residues 404-409 (KRLTDA) lie on the Cytoplasmic side of the membrane. The chain crosses the membrane as a helical span at residues 410-426 (TIFIVMYGLTSLYFAGV). The Lumenal segment spans residues 427 to 430 (MVRL). Residue R429 coordinates dolichyl diphosphooligosaccharide. Residues 431-452 (ILVATPAVCLISAIAVSATIKN) traverse the membrane as a helical segment. At 453-494 (LTSLLRTKQKVSQTGSTKGAGSSKASSKVTLDQSQPFQKNGA) the chain is on the cytoplasmic side. Residues 495–515 (IALLVGVFYLLSRYAIHCTWV) form a helical membrane-spanning segment. Residues 516 to 735 (TAEAYSSPSI…YRVKPPTNRL (220 aa)) are Lumenal-facing. An interacts with target acceptor peptide in protein substrate region spans residues 562 to 564 (WWD). A WWDYG motif motif is present at residues 562–566 (WWDYG). Y567 contributes to the dolichyl diphosphooligosaccharide binding site. 2 N-linked (GlcNAc...) asparagine glycosylation sites follow: N574 and N581. A glycan (N-linked (GlcNAc...) (high mannose) asparagine) is linked at N585. The DK motif signature appears at 629 to 636 (DINKFLWM).

It belongs to the STT3 family. As to quaternary structure, component of the oligosaccharyltransferase (OST) complex. Requires Mg(2+) as cofactor. Mn(2+) serves as cofactor. As to expression, expressed preferentially in the root but also in the shoot.

It localises to the endoplasmic reticulum membrane. It carries out the reaction a di-trans,poly-cis-dolichyl diphosphooligosaccharide + L-asparaginyl-[protein] = N(4)-(oligosaccharide-(1-&gt;4)-N-acetyl-beta-D-glucosaminyl-(1-&gt;4)-N-acetyl-beta-D-glucosaminyl)-L-asparaginyl-[protein] + a di-trans,poly-cis-dolichyl diphosphate + H(+). It participates in protein modification; protein glycosylation. Functionally, catalytic subunit of the oligosaccharyl transferase (OST) complex that catalyzes the initial transfer of a defined glycan (Glc(3)Man(9)GlcNAc(2) in eukaryotes) from the lipid carrier dolichol-pyrophosphate to an asparagine residue within an Asn-X-Ser/Thr consensus motif in nascent polypeptide chains, the first step in protein N-glycosylation. N-glycosylation occurs cotranslationally and the complex associates with the Sec61 complex at the channel-forming translocon complex that mediates protein translocation across the endoplasmic reticulum (ER). All subunits are required for a maximal enzyme activity. This subunit contains the active site and the acceptor peptide and donor lipid-linked oligosaccharide (LLO) binding pockets. This chain is Dolichyl-diphosphooligosaccharide--protein glycosyltransferase subunit STT3B (STT3B), found in Arabidopsis thaliana (Mouse-ear cress).